The primary structure comprises 426 residues: MNIISVGVNHKTAPIEIRERLSLSEVQAKEFLTNLIDDGIAQEAMVVSTCNRTELYVVPGMPEVDGNYMKEFLISYKDAQGEVRPEHFFNRFYCNTARHLFEVSSAVDSLILGEGQILGQVKNAYRIAVEVQSAGILLTRLCHTAFSVAKKVKTKTKIMEGAVSVSYAAVELAQKIFSNLSIKKILLVGAGETGELAAKHMFQKNARNIVITNRTLSKAEALAEELGTNQVLPYESYKDHLHEFDIIITAVSSKEYVLTEPELQQSMQKRRLKPVIILDLGLPRNVDPEIGNLKNMFLKDIDALKHIIDKNLEMRKCELPKVKKIIDEELVGFAQWINTLKVRPTIVDLQSKFLEIKEKELERFRYKVSDAELKRMERLTDRILKKILHHPIKMLKAPVDTADTIPSRVNLVRNIFDLEEQNRLSK.

Residues 49 to 52 (TCNR), serine 109, 114 to 116 (EGQ), and glutamine 120 each bind substrate. Cysteine 50 functions as the Nucleophile in the catalytic mechanism. An NADP(+)-binding site is contributed by 189 to 194 (GAGETG).

It belongs to the glutamyl-tRNA reductase family. Homodimer.

The catalysed reaction is (S)-4-amino-5-oxopentanoate + tRNA(Glu) + NADP(+) = L-glutamyl-tRNA(Glu) + NADPH + H(+). It participates in porphyrin-containing compound metabolism; protoporphyrin-IX biosynthesis; 5-aminolevulinate from L-glutamyl-tRNA(Glu): step 1/2. It functions in the pathway porphyrin-containing compound metabolism; chlorophyll biosynthesis. Catalyzes the NADPH-dependent reduction of glutamyl-tRNA(Glu) to glutamate 1-semialdehyde (GSA). The chain is Glutamyl-tRNA reductase from Chlorobium phaeobacteroides (strain BS1).